The following is a 31-amino-acid chain: U2-theraphotoxin-Hhn1a (31 aa).

Cystine bridges form between Cys2-Cys14, Cys7-Cys19, and Cys13-Cys26.

As to expression, expressed by the venom gland.

The protein localises to the secreted. Functionally, agglutinates erythrocytes. The sequence is that of U2-theraphotoxin-Hhn1a from Cyriopagopus hainanus (Chinese bird spider).